A 526-amino-acid chain; its full sequence is MAAFGIATGGSNWFSALALGVTLLKCLLIPTYHSTDFEVHRNWLAITHSLPISQWYYEATSEWTLDYPPFFAWFEYALSHVAKYFDQEMLNVRNLNYSSSRTLLFQRFSVIFTDALFVYAVHECCKCIDGKKAGKELTEKPKFILSALLLWNFGLLIVDHIHFQYNGFLSGLMLLSIARFFQKRHMEGAFLFAVLLHFKHIYLYVAPAYGVYLLRSYCFTANKQDGSIRWNSFSFVRLISLGLIVFLVSALSLGPFLALNQLPQVFSRLFPFKRGLCHAYWAPNFWALYSAFDKVLSVIGLELKLLDPNKIPKASMTSGLVQQFQHTVLPSVTPLATFICTLIAMLPSVFCLWCKPQGPRGFLRCLILCALSSFMFGWHVHEKAILLAVLPMSLLSVGKAVDASIFLILTTTGHYSPFPLLFTAPELPIKIILMLLFTIYSISSLKTLFRKEKPLFNWMETFYLLGLGPLEVFCEFVFPFTSWNLKYPFIPLLLTSVYCAVGITYAWLKLYVSVLIDPPVGKTKKQ.

11 helical membrane-spanning segments follow: residues Phe-4 to Leu-24, Leu-103 to His-122, Phe-143 to Phe-163, Gly-188 to Ala-208, Leu-238 to Ala-258, Pro-334 to Cys-354, Leu-368 to Ala-388, Val-389 to Leu-409, Leu-427 to Phe-449, Thr-461 to Thr-481, and Pro-488 to Leu-508.

It belongs to the ALG6/ALG8 glucosyltransferase family.

Its subcellular location is the endoplasmic reticulum membrane. It catalyses the reaction an alpha-D-Glc-(1-&gt;3)-alpha-D-Man-(1-&gt;2)-alpha-D-Man-(1-&gt;2)-alpha-D-Man-(1-&gt;3)-[alpha-D-Man-(1-&gt;2)-alpha-D-Man-(1-&gt;3)-[alpha-D-Man-(1-&gt;2)-alpha-D-Man-(1-&gt;6)]-alpha-D-Man-(1-&gt;6)]-beta-D-Man-(1-&gt;4)-beta-D-GlcNAc-(1-&gt;4)-alpha-D-GlcNAc-diphospho-di-trans,poly-cis-dolichol + a di-trans,poly-cis-dolichyl beta-D-glucosyl phosphate = an alpha-D-Glc-(1-&gt;3)-alpha-D-Glc-(1-&gt;3)-alpha-D-Man-(1-&gt;2)-alpha-D-Man-(1-&gt;2)-alpha-D-Man-(1-&gt;3)-[alpha-D-Man-(1-&gt;2)-alpha-D-Man-(1-&gt;3)-[alpha-D-Man-(1-&gt;2)-alpha-D-Man-(1-&gt;6)]-alpha-D-Man-(1-&gt;6)]-beta-D-Man-(1-&gt;4)-beta-D-GlcNAc-(1-&gt;4)-alpha-D-GlcNAc-diphospho-di-trans,poly-cis-dolichol + a di-trans,poly-cis-dolichyl phosphate + H(+). The protein operates within protein modification; protein glycosylation. Functionally, dolichyl pyrophosphate Glc1Man9GlcNAc2 alpha-1,3-glucosyltransferase that operates in the biosynthetic pathway of dolichol-linked oligosaccharides, the glycan precursors employed in protein asparagine (N)-glycosylation. The assembly of dolichol-linked oligosaccharides begins on the cytosolic side of the endoplasmic reticulum membrane and finishes in its lumen. The sequential addition of sugars to dolichol pyrophosphate produces dolichol-linked oligosaccharides containing fourteen sugars, including two GlcNAcs, nine mannoses and three glucoses. Once assembled, the oligosaccharide is transferred from the lipid to nascent proteins by oligosaccharyltransferases. In the lumen of the endoplasmic reticulum, adds the second glucose residue from dolichyl phosphate glucose (Dol-P-Glc) onto the lipid-linked oligosaccharide intermediate Glc(1)Man(9)GlcNAc(2)-PP-Dol to produce Glc(2)Man(9)GlcNAc(2)-PP-Dol. Glc(2)Man(9)GlcNAc(2)-PP-Dol is a substrate for ALG10, the following enzyme in the biosynthetic pathway. Required for PKD1/Polycystin-1 maturation and localization to the plasma membrane of the primary cilia. This is Dolichyl pyrophosphate Glc1Man9GlcNAc2 alpha-1,3-glucosyltransferase from Bos taurus (Bovine).